A 227-amino-acid chain; its full sequence is Triosephosphate isomerase (227 aa).

Residue 9 to 11 participates in substrate binding; that stretch reads NFK. The active-site Electrophile is H93. E141 functions as the Proton acceptor in the catalytic mechanism. Substrate-binding positions include I146, G180, and 201–202; that span reads AS.

Belongs to the triosephosphate isomerase family. In terms of assembly, homotetramer; dimer of dimers.

It is found in the cytoplasm. The catalysed reaction is D-glyceraldehyde 3-phosphate = dihydroxyacetone phosphate. Its pathway is carbohydrate biosynthesis; gluconeogenesis. The protein operates within carbohydrate degradation; glycolysis; D-glyceraldehyde 3-phosphate from glycerone phosphate: step 1/1. Functionally, involved in the gluconeogenesis. Catalyzes stereospecifically the conversion of dihydroxyacetone phosphate (DHAP) to D-glyceraldehyde-3-phosphate (G3P). The polypeptide is Triosephosphate isomerase (Saccharolobus solfataricus (strain ATCC 35092 / DSM 1617 / JCM 11322 / P2) (Sulfolobus solfataricus)).